The sequence spans 537 residues: CTP synthase (537 aa).

The amidoligase domain stretch occupies residues 1–268 (MSFKCIFLTG…STFITEKLGL (268 aa)). Ser14 contacts CTP. Ser14 is a binding site for UTP. 15 to 20 (SLGKGL) is a binding site for ATP. Tyr55 is an L-glutamine binding site. Asp72 is a binding site for ATP. Mg(2+) is bound by residues Asp72 and Glu142. CTP is bound by residues 149-151 (DIE), 188-193 (KTKPTQ), and Lys224. Residues 188 to 193 (KTKPTQ) and Lys224 contribute to the UTP site. The Glutamine amidotransferase type-1 domain maps to 294-533 (RLGLVGKYVQ…IEAALLHSRN (240 aa)). Gly353 serves as a coordination point for L-glutamine. The active-site Nucleophile; for glutamine hydrolysis is the Cys380. L-glutamine contacts are provided by residues 381–384 (LGMQ), Glu404, and Arg461. Catalysis depends on residues His506 and Glu508.

The protein belongs to the CTP synthase family. In terms of assembly, homotetramer.

It catalyses the reaction UTP + L-glutamine + ATP + H2O = CTP + L-glutamate + ADP + phosphate + 2 H(+). It carries out the reaction L-glutamine + H2O = L-glutamate + NH4(+). The enzyme catalyses UTP + NH4(+) + ATP = CTP + ADP + phosphate + 2 H(+). It functions in the pathway pyrimidine metabolism; CTP biosynthesis via de novo pathway; CTP from UDP: step 2/2. With respect to regulation, allosterically activated by GTP, when glutamine is the substrate; GTP has no effect on the reaction when ammonia is the substrate. The allosteric effector GTP functions by stabilizing the protein conformation that binds the tetrahedral intermediate(s) formed during glutamine hydrolysis. Inhibited by the product CTP, via allosteric rather than competitive inhibition. Catalyzes the ATP-dependent amination of UTP to CTP with either L-glutamine or ammonia as the source of nitrogen. Regulates intracellular CTP levels through interactions with the four ribonucleotide triphosphates. The protein is CTP synthase of Chlamydia abortus (strain DSM 27085 / S26/3) (Chlamydophila abortus).